Consider the following 342-residue polypeptide: Organic solute transporter alpha-like protein 2 (342 aa).

Over Met-1–Thr-50 the chain is Extracellular. Asn-20 is a glycosylation site (N-linked (GlcNAc...) asparagine). Residues Ala-51–Ile-71 form a helical membrane-spanning segment. Over Thr-72–His-79 the chain is Cytoplasmic. A helical transmembrane segment spans residues Ile-80 to Met-100. The Extracellular segment spans residues Pro-101–Leu-109. Residues Leu-110 to Phe-130 traverse the membrane as a helical segment. At Asp-131 to Leu-176 the chain is on the cytoplasmic side. Residues Met-177–Phe-197 traverse the membrane as a helical segment. The Extracellular segment spans residues Glu-198–Lys-208. A helical transmembrane segment spans residues Val-209–Val-229. At Thr-230–Tyr-243 the chain is on the cytoplasmic side. Residues Val-244 to Phe-264 traverse the membrane as a helical segment. At Asp-265–Asn-290 the chain is on the extracellular side. A helical transmembrane segment spans residues Phe-291 to Ser-311. The Cytoplasmic portion of the chain corresponds to Lys-312–Thr-342.

This sequence belongs to the OST-alpha family.

It is found in the cell membrane. Functionally, probable transporter. The chain is Organic solute transporter alpha-like protein 2 (osta-2) from Caenorhabditis elegans.